The following is an 80-amino-acid chain: Type VII secretion system accessory factor EsaB (80 aa).

This sequence belongs to the EsaB family.

The protein localises to the cytoplasm. Seems to regulate secreted factors that contribute to the establishment of persistent infections in the host. The polypeptide is Type VII secretion system accessory factor EsaB (Staphylococcus aureus (strain COL)).